The sequence spans 165 residues: 3-isopropylmalate dehydratase small subunit (165 aa).

This sequence belongs to the LeuD family. LeuD type 2 subfamily. Heterodimer of LeuC and LeuD.

The catalysed reaction is (2R,3S)-3-isopropylmalate = (2S)-2-isopropylmalate. The protein operates within amino-acid biosynthesis; L-leucine biosynthesis; L-leucine from 3-methyl-2-oxobutanoate: step 2/4. Functionally, catalyzes the isomerization between 2-isopropylmalate and 3-isopropylmalate, via the formation of 2-isopropylmaleate. The protein is 3-isopropylmalate dehydratase small subunit of Hydrogenobaculum sp. (strain Y04AAS1).